The primary structure comprises 154 residues: Large-conductance mechanosensitive channel (154 aa).

The next 3 helical transmembrane spans lie at 16 to 36 (VLGLGIAVIMGDAFNKIISSV), 39 to 59 (DLLMPIIGAVFGGVDFSGFFI), and 89 to 109 (GQFLTVVVNFVIVAFILFMIM).

This sequence belongs to the MscL family. In terms of assembly, homopentamer.

The protein localises to the cell inner membrane. Its function is as follows. Channel that opens in response to stretch forces in the membrane lipid bilayer. May participate in the regulation of osmotic pressure changes within the cell. The chain is Large-conductance mechanosensitive channel from Zymomonas mobilis subsp. mobilis (strain ATCC 31821 / ZM4 / CP4).